A 354-amino-acid polypeptide reads, in one-letter code: Release factor glutamine methyltransferase (354 aa).

S-adenosyl-L-methionine contacts are provided by residues 174–178, aspartate 197, and asparagine 241; that span reads GSGSG. 241–244 provides a ligand contact to substrate; it reads NPPY.

This sequence belongs to the protein N5-glutamine methyltransferase family. PrmC subfamily.

It catalyses the reaction L-glutaminyl-[peptide chain release factor] + S-adenosyl-L-methionine = N(5)-methyl-L-glutaminyl-[peptide chain release factor] + S-adenosyl-L-homocysteine + H(+). Its function is as follows. Methylates the class 1 translation termination release factors RF1/PrfA and RF2/PrfB on the glutamine residue of the universally conserved GGQ motif. The chain is Release factor glutamine methyltransferase from Fusobacterium nucleatum subsp. nucleatum (strain ATCC 25586 / DSM 15643 / BCRC 10681 / CIP 101130 / JCM 8532 / KCTC 2640 / LMG 13131 / VPI 4355).